The sequence spans 170 residues: Lipoprotein signal peptidase (170 aa).

Transmembrane regions (helical) follow at residues 9-29 (FNIF…KYLV), 72-92 (IFFL…SLKE), and 94-114 (NCIA…NVID). Residues Asp-124 and Asp-146 contribute to the active site. The helical transmembrane segment at 143-163 (NFADSYVVIGMILFLVYDFFI) threads the bilayer.

This sequence belongs to the peptidase A8 family.

It localises to the cell inner membrane. The catalysed reaction is Release of signal peptides from bacterial membrane prolipoproteins. Hydrolyzes -Xaa-Yaa-Zaa-|-(S,diacylglyceryl)Cys-, in which Xaa is hydrophobic (preferably Leu), and Yaa (Ala or Ser) and Zaa (Gly or Ala) have small, neutral side chains.. It functions in the pathway protein modification; lipoprotein biosynthesis (signal peptide cleavage). This protein specifically catalyzes the removal of signal peptides from prolipoproteins. This chain is Lipoprotein signal peptidase, found in Borreliella burgdorferi (strain ATCC 35210 / DSM 4680 / CIP 102532 / B31) (Borrelia burgdorferi).